Reading from the N-terminus, the 283-residue chain is Movement protein (283 aa).

It belongs to the tenuiviruses pc4 protein family.

Transports viral genome to neighboring plant cells directly through plasmosdesmata, without any budding. The movement protein allows efficient cell to cell propagation, by bypassing the host cell wall barrier. The sequence is that of Movement protein from Maize stripe virus (MStV).